Reading from the N-terminus, the 124-residue chain is Large ribosomal subunit protein bL12 (124 aa).

This sequence belongs to the bacterial ribosomal protein bL12 family. In terms of assembly, homodimer. Part of the ribosomal stalk of the 50S ribosomal subunit. Forms a multimeric L10(L12)X complex, where L10 forms an elongated spine to which 2 to 4 L12 dimers bind in a sequential fashion. Binds GTP-bound translation factors.

In terms of biological role, forms part of the ribosomal stalk which helps the ribosome interact with GTP-bound translation factors. Is thus essential for accurate translation. This is Large ribosomal subunit protein bL12 from Aromatoleum aromaticum (strain DSM 19018 / LMG 30748 / EbN1) (Azoarcus sp. (strain EbN1)).